We begin with the raw amino-acid sequence, 347 residues long: Protein RecA (347 aa).

64-71 (GPESSGKT) is a binding site for ATP.

This sequence belongs to the RecA family.

The protein localises to the cytoplasm. Can catalyze the hydrolysis of ATP in the presence of single-stranded DNA, the ATP-dependent uptake of single-stranded DNA by duplex DNA, and the ATP-dependent hybridization of homologous single-stranded DNAs. It interacts with LexA causing its activation and leading to its autocatalytic cleavage. This chain is Protein RecA, found in Bartonella bacilliformis (strain ATCC 35685 / KC583 / Herrer 020/F12,63).